The chain runs to 341 residues: L-threonine 3-dehydrogenase (341 aa).

C38 contacts Zn(2+). Active-site charge relay system residues include T40 and H43. Positions 63, 64, 93, 96, 99, and 107 each coordinate Zn(2+). NAD(+)-binding positions include I175, D195, R200, 262-264, and 286-287; these read LGI and IY.

This sequence belongs to the zinc-containing alcohol dehydrogenase family. In terms of assembly, homotetramer. Requires Zn(2+) as cofactor.

The protein resides in the cytoplasm. The catalysed reaction is L-threonine + NAD(+) = (2S)-2-amino-3-oxobutanoate + NADH + H(+). It participates in amino-acid degradation; L-threonine degradation via oxydo-reductase pathway; glycine from L-threonine: step 1/2. Its function is as follows. Catalyzes the NAD(+)-dependent oxidation of L-threonine to 2-amino-3-ketobutyrate. The chain is L-threonine 3-dehydrogenase from Yersinia pseudotuberculosis serotype O:1b (strain IP 31758).